The sequence spans 417 residues: Serine hydroxymethyltransferase (417 aa).

(6S)-5,6,7,8-tetrahydrofolate is bound by residues Leu122 and 126 to 128 (GHL). At Lys230 the chain carries N6-(pyridoxal phosphate)lysine. 355-357 (SPF) lines the (6S)-5,6,7,8-tetrahydrofolate pocket.

It belongs to the SHMT family. Homodimer. Requires pyridoxal 5'-phosphate as cofactor.

Its subcellular location is the cytoplasm. It catalyses the reaction (6R)-5,10-methylene-5,6,7,8-tetrahydrofolate + glycine + H2O = (6S)-5,6,7,8-tetrahydrofolate + L-serine. The protein operates within one-carbon metabolism; tetrahydrofolate interconversion. Its pathway is amino-acid biosynthesis; glycine biosynthesis; glycine from L-serine: step 1/1. Catalyzes the reversible interconversion of serine and glycine with tetrahydrofolate (THF) serving as the one-carbon carrier. This reaction serves as the major source of one-carbon groups required for the biosynthesis of purines, thymidylate, methionine, and other important biomolecules. Also exhibits THF-independent aldolase activity toward beta-hydroxyamino acids, producing glycine and aldehydes, via a retro-aldol mechanism. The chain is Serine hydroxymethyltransferase from Francisella philomiragia subsp. philomiragia (strain ATCC 25017 / CCUG 19701 / FSC 153 / O#319-036).